The primary structure comprises 221 residues: Putative 5'(3')-deoxyribonucleotidase R824 (221 aa).

Mg(2+) contacts are provided by D16 and D18. D18 (nucleophile) is an active-site residue. Phosphate is bound by residues D18, S103, and K138. D149 lines the Mg(2+) pocket.

The protein belongs to the 5'(3')-deoxyribonucleotidase family. Mg(2+) is required as a cofactor.

Its function is as follows. Dephosphorylates the 5' and 2'(3')-phosphates of deoxyribonucleotides. In Acanthamoeba polyphaga mimivirus (APMV), this protein is Putative 5'(3')-deoxyribonucleotidase R824.